We begin with the raw amino-acid sequence, 107 residues long: Nucleoid-associated protein Rru_A3472 (107 aa).

Belongs to the YbaB/EbfC family. As to quaternary structure, homodimer.

The protein resides in the cytoplasm. It is found in the nucleoid. Functionally, binds to DNA and alters its conformation. May be involved in regulation of gene expression, nucleoid organization and DNA protection. In Rhodospirillum rubrum (strain ATCC 11170 / ATH 1.1.1 / DSM 467 / LMG 4362 / NCIMB 8255 / S1), this protein is Nucleoid-associated protein Rru_A3472.